Consider the following 476-residue polypeptide: Adenosylhomocysteinase (476 aa).

Substrate contacts are provided by threonine 61, aspartate 140, and glutamate 200. 201 to 203 (TTT) serves as a coordination point for NAD(+). Positions 230 and 234 each coordinate substrate. Residues asparagine 235, 264–269 (GYGDVG), glutamate 287, asparagine 322, 343–345 (IGH), and asparagine 389 contribute to the NAD(+) site.

Belongs to the adenosylhomocysteinase family. NAD(+) is required as a cofactor.

It localises to the cytoplasm. It carries out the reaction S-adenosyl-L-homocysteine + H2O = L-homocysteine + adenosine. Its pathway is amino-acid biosynthesis; L-homocysteine biosynthesis; L-homocysteine from S-adenosyl-L-homocysteine: step 1/1. In terms of biological role, may play a key role in the regulation of the intracellular concentration of adenosylhomocysteine. This chain is Adenosylhomocysteinase, found in Acidovorax sp. (strain JS42).